A 249-amino-acid chain; its full sequence is Adapter protein MecA (249 aa).

It belongs to the MecA family. Homodimer.

Its function is as follows. Enables the recognition and targeting of unfolded and aggregated proteins to the ClpC protease or to other proteins involved in proteolysis. The sequence is that of Adapter protein MecA from Streptococcus thermophilus (strain ATCC BAA-491 / LMD-9).